The sequence spans 428 residues: MKAELIKKEGNKVTLKITVDNNKFEAAVNKAYNKSRNKYNIPGFRKGKAPRIVIETQYGKGIFYNDAIEILFPEVYPEAIKELDIDPIDNPDLDIEEISKDNGLVMVLNVEVKPEFELGNYKGIEIAKVENTVSDENVDAKLQEMVEKNARLVSVEDKALEDGDTAIIDFEGFENGVAFDGGKGENYNLVIGSNTFIPGFEEQLVGKKAGEEVEVNVTFPEEYHSQDLAGKPVVFNVKINDVKVKELSALDDEFAKDTSEFDSLDELKADVRAKLEEEAKNRADAETRNSVVEKVAENTEIEIPEVMIQHQIDNMLNELNYQLQYQGFGLQQLLEMTGRTMEELREERKEDAKKLVKSSLVLEAITKAEGIEATEEEFKAELEKMASAYNMEVEKIEASLRDADKEDIKGQIKIRKTIDLLVDNATIA.

The PPIase FKBP-type domain maps to 163 to 248 (GDTAIIDFEG…INDVKVKELS (86 aa)).

This sequence belongs to the FKBP-type PPIase family. Tig subfamily.

The protein resides in the cytoplasm. It catalyses the reaction [protein]-peptidylproline (omega=180) = [protein]-peptidylproline (omega=0). Involved in protein export. Acts as a chaperone by maintaining the newly synthesized protein in an open conformation. Functions as a peptidyl-prolyl cis-trans isomerase. This Clostridioides difficile (strain 630) (Peptoclostridium difficile) protein is Trigger factor.